Consider the following 342-residue polypeptide: Ribosomal RNA small subunit methyltransferase C (342 aa).

This sequence belongs to the methyltransferase superfamily. RsmC family. Monomer.

Its subcellular location is the cytoplasm. The enzyme catalyses guanosine(1207) in 16S rRNA + S-adenosyl-L-methionine = N(2)-methylguanosine(1207) in 16S rRNA + S-adenosyl-L-homocysteine + H(+). Its function is as follows. Specifically methylates the guanine in position 1207 of 16S rRNA in the 30S particle. In Salmonella arizonae (strain ATCC BAA-731 / CDC346-86 / RSK2980), this protein is Ribosomal RNA small subunit methyltransferase C.